The primary structure comprises 606 residues: UPF0329 protein ECU06_0090 (606 aa).

The disordered stretch occupies residues 317-401 (KKEEERREEE…SREACSKERN (85 aa)). Positions 328–353 (EKKRKEEVVQRNVEELLRGEEEEKKG) are enriched in basic and acidic residues. Residues 354-367 (AKAKRKSKKKKKGS) show a composition bias toward basic residues. Residues 381 to 401 (SENREAQEMEDSREACSKERN) are compositionally biased toward basic and acidic residues.

Belongs to the UPF0329 family.

The polypeptide is UPF0329 protein ECU06_0090 (Encephalitozoon cuniculi (strain GB-M1) (Microsporidian parasite)).